The chain runs to 615 residues: RUN domain-containing protein 1 (615 aa).

Residues T15 to R41 are disordered. A compositionally biased stretch (acidic residues) spans E24–S33. At S73 the chain carries Phosphoserine. Coiled-coil stretches lie at residues D76–H102 and R163–E238. Positions D147–T180 are disordered. The span at P158 to T180 shows a compositional bias: basic and acidic residues. An RUN domain is found at E423–A604. Phosphoserine is present on S499.

Its function is as follows. May play a role as p53/TP53 inhibitor and thus may have oncogenic activity. This Mus musculus (Mouse) protein is RUN domain-containing protein 1 (Rundc1).